The following is a 474-amino-acid chain: Glutamate--tRNA ligase (474 aa).

Positions 11–21 match the 'HIGH' region motif; the sequence is PSPTGFLHIGG. The 'KMSKS' region motif lies at 240 to 244; it reads KLSKR. Lysine 243 serves as a coordination point for ATP.

It belongs to the class-I aminoacyl-tRNA synthetase family. Glutamate--tRNA ligase type 1 subfamily. Monomer.

The protein localises to the cytoplasm. The enzyme catalyses tRNA(Glu) + L-glutamate + ATP = L-glutamyl-tRNA(Glu) + AMP + diphosphate. Functionally, catalyzes the attachment of glutamate to tRNA(Glu) in a two-step reaction: glutamate is first activated by ATP to form Glu-AMP and then transferred to the acceptor end of tRNA(Glu). In Bradyrhizobium sp. (strain BTAi1 / ATCC BAA-1182), this protein is Glutamate--tRNA ligase.